Consider the following 158-residue polypeptide: Phosphopantetheine adenylyltransferase (158 aa).

Residue serine 10 coordinates substrate. ATP is bound by residues 10–11 (SF) and histidine 18. Positions 42, 74, and 88 each coordinate substrate. ATP contacts are provided by residues 89 to 91 (GLR), glutamate 99, and 124 to 130 (YANISSS).

The protein belongs to the bacterial CoaD family. In terms of assembly, homohexamer. Mg(2+) is required as a cofactor.

It is found in the cytoplasm. It carries out the reaction (R)-4'-phosphopantetheine + ATP + H(+) = 3'-dephospho-CoA + diphosphate. It functions in the pathway cofactor biosynthesis; coenzyme A biosynthesis; CoA from (R)-pantothenate: step 4/5. Reversibly transfers an adenylyl group from ATP to 4'-phosphopantetheine, yielding dephospho-CoA (dPCoA) and pyrophosphate. The chain is Phosphopantetheine adenylyltransferase from Vesicomyosocius okutanii subsp. Calyptogena okutanii (strain HA).